The sequence spans 221 residues: MSYGRPPPDVEGMTSLKVDNLTYRTSPDTLRRVFEKYGRVGDVYIPRDRYTKESRGFAFVRFHDKRDAEDAMDAMDGAVLDGRELRVQMARYGRPPDSHHSRRGPPPRRYGGGGYGRRSRSPRRRRRSRSRSRSRSRSRSRSRYSRSKSRSRTRSRSRSTSKSRSARRSKSKSSSVSRSRSRSRSRSRSRSPPPASKRESKSRSRSKSPPKSPEEEGAVSS.

At Ser-2 the chain carries N-acetylserine. Ser-2 is subject to Phosphoserine. One can recognise an RRM domain in the interval 14–92 (TSLKVDNLTY…RELRVQMARY (79 aa)). A phosphothreonine mark is found at Thr-22 and Thr-25. At Ser-26 the chain carries Phosphoserine. Lys-52 carries the N6-acetyllysine modification. The tract at residues 92-221 (YGRPPDSHHS…SPEEEGAVSS (130 aa)) is disordered. Composition is skewed to basic residues over residues 117–171 (RRSR…RSKS) and 179–189 (SRSRSRSRSRS). Phosphoserine is present on residues Ser-189, Ser-191, Ser-204, Ser-206, Ser-208, Ser-212, and Ser-220.

This sequence belongs to the splicing factor SR family. In vitro, self-associates and binds SRSF1/SFRS1 (ASF/SF2), SNRNP70 and U2AF1 but not U2AF2. Binds SREK1/SFRS12. Interacts with CCNL1 and CCNL2. Interacts with SCAF11. Interacts with ZRSR2/U2AF1-RS2. Interacts with CCDC55 (via C-terminus). Interacts with BRDT. Extensively phosphorylated on serine residues in the RS domain. Phosphorylated by SRPK2 and this causes its redistribution from the nuclear speckle to nucleoplasm and controls cell fate decision in response to cisplatin treatment. KAT5/TIP60 inhibits its phosphorylation by preventing SRPK2 nuclear translocation. In terms of processing, acetylation on Lys-52 by KAT5/TIP60 promotes its proteasomal degradation. This effect is counterbalanced by HDAC6, which positively controls SRSF2 protein level by deacetylating it and preventing its proteasomal degradation.

The protein resides in the nucleus. Its subcellular location is the nucleoplasm. It localises to the nucleus speckle. Its function is as follows. Necessary for the splicing of pre-mRNA. It is required for formation of the earliest ATP-dependent splicing complex and interacts with spliceosomal components bound to both the 5'- and 3'-splice sites during spliceosome assembly. It also is required for ATP-dependent interactions of both U1 and U2 snRNPs with pre-mRNA. Interacts with other spliceosomal components, via the RS domains, to form a bridge between the 5'- and 3'-splice site binding components, U1 snRNP and U2AF. Binds to purine-rich RNA sequences, either 5'-AGSAGAGTA-3' (S=C or G) or 5'-GTTCGAGTA-3'. Can bind to beta-globin mRNA and commit it to the splicing pathway. The phosphorylated form (by SRPK2) is required for cellular apoptosis in response to cisplatin treatment. This Sus scrofa (Pig) protein is Serine/arginine-rich splicing factor 2 (SRSF2).